The chain runs to 460 residues: Glutamyl-tRNA reductase (460 aa).

Substrate-binding positions include 48–51 (TCNR), serine 100, 105–107 (EDQ), and glutamine 111. Cysteine 49 serves as the catalytic Nucleophile. 180 to 185 (GAGEIG) is a binding site for NADP(+).

It belongs to the glutamyl-tRNA reductase family. As to quaternary structure, homodimer.

The enzyme catalyses (S)-4-amino-5-oxopentanoate + tRNA(Glu) + NADP(+) = L-glutamyl-tRNA(Glu) + NADPH + H(+). Its pathway is porphyrin-containing compound metabolism; protoporphyrin-IX biosynthesis; 5-aminolevulinate from L-glutamyl-tRNA(Glu): step 1/2. In terms of biological role, catalyzes the NADPH-dependent reduction of glutamyl-tRNA(Glu) to glutamate 1-semialdehyde (GSA). In Methanosarcina acetivorans (strain ATCC 35395 / DSM 2834 / JCM 12185 / C2A), this protein is Glutamyl-tRNA reductase.